The chain runs to 188 residues: MNLLIVGLGNPGSNFLHTRHNVGFGLIDKLVMKNALSLRKAKNYEYADFNVDSRRIVLIKPLTYMNLSGNIFPCVFSKFYMKINNLLVVVDNVDLPLGKCRLRKVGGASTHNGLRSISESLGSTKYGRLYIGVGNNSAFGLKDFVLSKFNDSELVRVKNVFNFLSEEILGIDEFSFEHKIATINSSSF.

A tRNA-binding site is contributed by Phe15. The active-site Proton acceptor is the His20. The tRNA site is built by Tyr64, Asn66, and Asn112.

The protein belongs to the PTH family. In terms of assembly, monomer.

The protein resides in the cytoplasm. It carries out the reaction an N-acyl-L-alpha-aminoacyl-tRNA + H2O = an N-acyl-L-amino acid + a tRNA + H(+). Functionally, hydrolyzes ribosome-free peptidyl-tRNAs (with 1 or more amino acids incorporated), which drop off the ribosome during protein synthesis, or as a result of ribosome stalling. Its function is as follows. Catalyzes the release of premature peptidyl moieties from peptidyl-tRNA molecules trapped in stalled 50S ribosomal subunits, and thus maintains levels of free tRNAs and 50S ribosomes. The polypeptide is Peptidyl-tRNA hydrolase (Borrelia recurrentis (strain A1)).